Here is a 279-residue protein sequence, read N- to C-terminus: Putative potassium channel regulatory protein (279 aa).

The BTB domain occupies 5 to 74; the sequence is ELVTLNVGGM…VRTSQLSLPS (70 aa). Positions 256-279 are disordered; sequence ENSRQENYETETVQVKQAKPNKKR.

It is found in the endoplasmic reticulum. Inhibits potassium fluxes in cells, possibly by retaining potassium channels in the cytoplasm. This Xenopus tropicalis (Western clawed frog) protein is Putative potassium channel regulatory protein (kcnrg).